The chain runs to 160 residues: 3-dehydroquinate dehydratase (160 aa).

Tyrosine 22 acts as the Proton acceptor in catalysis. The substrate site is built by asparagine 73, histidine 79, and aspartate 86. Histidine 99 functions as the Proton donor in the catalytic mechanism. Substrate is bound by residues 100–101 and arginine 110; that span reads IS.

This sequence belongs to the type-II 3-dehydroquinase family. Homododecamer.

The enzyme catalyses 3-dehydroquinate = 3-dehydroshikimate + H2O. It participates in metabolic intermediate biosynthesis; chorismate biosynthesis; chorismate from D-erythrose 4-phosphate and phosphoenolpyruvate: step 3/7. Its function is as follows. Catalyzes a trans-dehydration via an enolate intermediate. This Campylobacter lari (strain RM2100 / D67 / ATCC BAA-1060) protein is 3-dehydroquinate dehydratase.